The sequence spans 252 residues: Phosphate import ATP-binding protein PstB 1 (252 aa).

The ABC transporter domain maps to 6 to 247 (LQVSDLSVYY…PQHKETEDYI (242 aa)). An ATP-binding site is contributed by 38 to 45 (GPSGSGKS).

This sequence belongs to the ABC transporter superfamily. Phosphate importer (TC 3.A.1.7) family. In terms of assembly, the complex is composed of two ATP-binding proteins (PstB), two transmembrane proteins (PstC and PstA) and a solute-binding protein (PstS).

It is found in the cell membrane. The enzyme catalyses phosphate(out) + ATP + H2O = ADP + 2 phosphate(in) + H(+). Its function is as follows. Part of the ABC transporter complex PstSACB involved in phosphate import. Responsible for energy coupling to the transport system. This is Phosphate import ATP-binding protein PstB 1 from Streptococcus pneumoniae (strain ATCC BAA-255 / R6).